Reading from the N-terminus, the 284-residue chain is Tropomyosin (284 aa).

Positions methionine 1–tyrosine 284 form a coiled coil. The disordered stretch occupies residues glutamate 103–arginine 133.

It belongs to the tropomyosin family. In terms of assembly, homodimer.

Tropomyosin, in association with the troponin complex, plays a central role in the calcium dependent regulation of muscle contraction. The protein is Tropomyosin of Chlamys nipponensis akazara (Akazara scallop).